The chain runs to 213 residues: Bcl-2-related ovarian killer protein (213 aa).

Phosphoserine is present on Ser7. Residues 15–45 are interactions with ITPR1; the sequence is MDAFDRSPTDKELVAQAKALGREYVHARLLR. Glycyl lysine isopeptide (Lys-Gly) (interchain with G-Cter in ubiquitin) cross-links involve residues Lys25 and Lys32. Residues 32–44 carry the BH4 motif; that stretch reads KALGREYVHARLL. Residues 67–83 carry the BH3 motif; it reads VCTVLLRLGDELEQIRP. A nuclear export signal region spans residues 71-79; that stretch reads LLRLGDELE. A BH1 motif is present at residues 113–132; that stretch reads HIFSAGITWGKVVSLYSVAA. Glycyl lysine isopeptide (Lys-Gly) (interchain with G-Cter in ubiquitin) cross-links involve residues Lys160 and Lys177. The BH2 motif lies at 165 to 179; the sequence is WLRRRGGWTDVLKCV. A helical membrane pass occupies residues 190–210; the sequence is WLVATLCSFGRFLKAAFFLLL.

It belongs to the Bcl-2 family. As to quaternary structure, monomer; positively regulates apoptotic process. Homodimer. Heterodimer. Oligomer; promoted by apoptotic stimuli and BH3-only proteins; mediates constitutive activation. Interacts (via BH4 domain) with ITPR1; enhances BOK expression and stabilization; limits apoptosis and prevents ubiquitination and then degradation; protects ITPR1 from proteolysis by CASP3 during apoptosis. Interacts with ITPR2 and ITPR3; binds most strongly to ITPR2, and barely to ITPR3; regulates their expression. Interacts with XPO1; translocates to the cytoplasm. Interacts with BNIP3; promotes oligomerization. In terms of processing, ubiquitinated by AMFR/gp78 E3 ubiquitin ligase complex; mediates degradation by ubiquitin-proteasome pathway in a VCP/p97-dependent manner; prevents from proapoptotic activity; promotes degradation of newly synthesized proteins that are not ITPR1 associated. In terms of tissue distribution, widely expressed. Highly expressed in brain, kidney, and spleen.

It is found in the mitochondrion membrane. The protein resides in the endoplasmic reticulum membrane. It localises to the mitochondrion inner membrane. The protein localises to the cytoplasm. Its subcellular location is the nucleus. It is found in the mitochondrion. The protein resides in the endoplasmic reticulum. It localises to the mitochondrion outer membrane. The protein localises to the early endosome membrane. Its subcellular location is the recycling endosome membrane. It is found in the nucleus outer membrane. The protein resides in the golgi apparatus. It localises to the cis-Golgi network membrane. The protein localises to the trans-Golgi network membrane. Its subcellular location is the membrane. In terms of biological role, apoptosis regulator that functions through different apoptotic signaling pathways. Plays a roles as pro-apoptotic protein that positively regulates intrinsic apoptotic process in a BAX- and BAK1-dependent manner or in a BAX- and BAK1-independent manner. In response to endoplasmic reticulum stress promotes mitochondrial apoptosis through downstream BAX/BAK1 activation and positive regulation of PERK-mediated unfolded protein response. Activates apoptosis independently of heterodimerization with survival-promoting BCL2 and BCL2L1 through induction of mitochondrial outer membrane permeabilization, in a BAX- and BAK1-independent manner, in response to inhibition of ERAD-proteasome degradation system, resulting in cytochrome c release. In response to DNA damage, mediates intrinsic apoptotic process in a TP53-dependent manner. Plays a role in granulosa cell apoptosis by CASP3 activation. Plays a roles as anti-apoptotic protein during neuronal apoptotic process, by negatively regulating poly ADP-ribose polymerase-dependent cell death through regulation of neuronal calcium homeostasis and mitochondrial bioenergetics in response to NMDA excitation. In addition to its role in apoptosis, may regulate trophoblast cell proliferation during the early stages of placental development, by acting on G1/S transition through regulation of CCNE1 expression. May also play a role as an inducer of autophagy by disrupting interaction between MCL1 and BECN1. This Mus musculus (Mouse) protein is Bcl-2-related ovarian killer protein.